A 501-amino-acid chain; its full sequence is Circadian clock oscillator protein KaiC (501 aa).

KaiC domains follow at residues 1–232 (MQVQ…ITVF) and 246–501 (IRIS…REKK). 17 residues coordinate ATP: Gly34, Thr35, Gly36, Lys37, Thr38, Ser74, Lys209, Leu210, Arg211, Thr213, His215, Thr275, Gly276, Thr277, Gly278, Lys279, and Thr280. Residue Thr38 coordinates Mg(2+). The Mg(2+) site is built by Thr280 and Glu303. Trp316 is a binding site for ATP. Ser416 bears the Phosphoserine; by autocatalysis mark. At Thr417 the chain carries Phosphothreonine; by autocatalysis. ATP-binding residues include Arg436, Lys442, Met443, Arg444, Ser446, His448, and Lys450.

Belongs to the KaiC family. In terms of assembly, homohexamer; hexamerization is dependent on ATP-binding. Component of the KaiBC complex. KaiC interacts with SasA, activating its autokinase function and leading to RpaA activation. Mg(2+) serves as cofactor. Phosphorylated on serine and threonine residues by autocatalysis. Has a 4 step phosphorylation cycle; the autokinase acts first on Thr-417, then Ser-416. When Ser-416 is modified KaiC switches to an autophosphatase mode, acting first on phospho-Thr-417 then phospho-Ser-416.

The enzyme catalyses L-seryl-[protein] + ATP = O-phospho-L-seryl-[protein] + ADP + H(+). It catalyses the reaction L-threonyl-[protein] + ATP = O-phospho-L-threonyl-[protein] + ADP + H(+). It carries out the reaction ATP + H2O = ADP + phosphate + H(+). Its function is as follows. Central component of the KaiBC oscillator complex, which constitutes the main circadian regulator in cyanobacteria. Its composition changes during the circadian cycle to control KaiC phosphorylation. Autophosphorylates and has a weak ATPase activity; ATPase activity defines the circadian period. The sequence is that of Circadian clock oscillator protein KaiC from Prochlorococcus marinus (strain SARG / CCMP1375 / SS120).